The chain runs to 709 residues: Elongation factor G (709 aa).

One can recognise a tr-type G domain in the interval 8-290; the sequence is NRYRNIGISA…AVIQYMPAPQ (283 aa). Residues 17–24, 88–92, and 142–145 each bind GTP; these read AHIDAGKT, DTPGH, and NKMD.

This sequence belongs to the TRAFAC class translation factor GTPase superfamily. Classic translation factor GTPase family. EF-G/EF-2 subfamily.

Its subcellular location is the cytoplasm. Its function is as follows. Catalyzes the GTP-dependent ribosomal translocation step during translation elongation. During this step, the ribosome changes from the pre-translocational (PRE) to the post-translocational (POST) state as the newly formed A-site-bound peptidyl-tRNA and P-site-bound deacylated tRNA move to the P and E sites, respectively. Catalyzes the coordinated movement of the two tRNA molecules, the mRNA and conformational changes in the ribosome. The protein is Elongation factor G of Psychrobacter sp. (strain PRwf-1).